The primary structure comprises 207 residues: Interleukin-6 (207 aa).

A signal peptide spans 1–20 (MNSLSTSAFSLGLLLVMATA). Cys67 and Cys73 form a disulfide bridge. Residue Ser76 is modified to Phosphoserine. Cys96 and Cys106 form a disulfide bridge.

It belongs to the IL-6 superfamily. Component of a hexamer of two molecules each of IL6, IL6R and IL6ST; first binds to IL6R to associate with the signaling subunit IL6ST. Interacts with IL6R (via the N-terminal ectodomain); this interaction may be affected by IL6R-binding with SORL1, hence decreasing IL6 cis signaling. Interacts with SORL1 (via the N-terminal ectodomain); this interaction leads to IL6 internalization and lysosomal degradation. May form a trimeric complex with the soluble SORL1 ectodomain and soluble IL6R receptor; this interaction might stabilize circulating IL6, hence promoting IL6 trans signaling.

The protein localises to the secreted. Its function is as follows. Cytokine with a wide variety of biological functions in immunity, tissue regeneration, and metabolism. Binds to IL6R, then the complex associates to the signaling subunit IL6ST/gp130 to trigger the intracellular IL6-signaling pathway. The interaction with the membrane-bound IL6R and IL6ST stimulates 'classic signaling', whereas the binding of IL6 and soluble IL6R to IL6ST stimulates 'trans-signaling'. Alternatively, 'cluster signaling' occurs when membrane-bound IL6:IL6R complexes on transmitter cells activate IL6ST receptors on neighboring receiver cells. IL6 is a potent inducer of the acute phase response. Rapid production of IL6 contributes to host defense during infection and tissue injury, but excessive IL6 synthesis is involved in disease pathology. In the innate immune response, is synthesized by myeloid cells, such as macrophages and dendritic cells, upon recognition of pathogens through toll-like receptors (TLRs) at the site of infection or tissue injury. In the adaptive immune response, is required for the differentiation of B cells into immunoglobulin-secreting cells. Plays a major role in the differentiation of CD4(+) T cell subsets. Essential factor for the development of T follicular helper (Tfh) cells that are required for the induction of germinal-center formation. Required to drive naive CD4(+) T cells to the Th17 lineage. Also required for proliferation of myeloma cells and the survival of plasmablast cells. In terms of biological role, acts as an essential factor in bone homeostasis and on vessels directly or indirectly by induction of VEGF, resulting in increased angiogenesis activity and vascular permeability. Induces, through 'trans-signaling' and synergistically with IL1B and TNF, the production of VEGF. Involved in metabolic controls, is discharged into the bloodstream after muscle contraction increasing lipolysis and improving insulin resistance. 'Trans-signaling' in central nervous system also regulates energy and glucose homeostasis. Mediates, through GLP-1, crosstalk between insulin-sensitive tissues, intestinal L cells and pancreatic islets to adapt to changes in insulin demand. Also acts as a myokine. Plays a protective role during liver injury, being required for maintenance of tissue regeneration. Also has a pivotal role in iron metabolism by regulating HAMP/hepcidin expression upon inflammation or bacterial infection. Through activation of IL6ST-YAP-NOTCH pathway, induces inflammation-induced epithelial regeneration. The protein is Interleukin-6 (IL6) of Vulpes vulpes (Red fox).